A 298-amino-acid chain; its full sequence is Acetylglutamate kinase (298 aa).

Residues 64–65 (GG), arginine 86, and asparagine 195 each bind substrate.

It belongs to the acetylglutamate kinase family. ArgB subfamily.

The protein localises to the cytoplasm. The catalysed reaction is N-acetyl-L-glutamate + ATP = N-acetyl-L-glutamyl 5-phosphate + ADP. Its pathway is amino-acid biosynthesis; L-arginine biosynthesis; N(2)-acetyl-L-ornithine from L-glutamate: step 2/4. Catalyzes the ATP-dependent phosphorylation of N-acetyl-L-glutamate. In Aquifex aeolicus (strain VF5), this protein is Acetylglutamate kinase.